The following is a 412-amino-acid chain: Argininosuccinate synthase (412 aa).

ATP is bound by residues 24-32 (AFSGGLDTS) and Ala-50. Residues Tyr-103 and Ser-108 each coordinate L-citrulline. Position 132 (Gly-132) interacts with ATP. 3 residues coordinate L-aspartate: Thr-134, Asn-138, and Asp-139. Asn-138 contributes to the L-citrulline binding site. Arg-142 lines the L-citrulline pocket.

Belongs to the argininosuccinate synthase family. Type 1 subfamily. In terms of assembly, homotetramer.

It is found in the cytoplasm. It carries out the reaction L-citrulline + L-aspartate + ATP = 2-(N(omega)-L-arginino)succinate + AMP + diphosphate + H(+). It participates in amino-acid biosynthesis; L-arginine biosynthesis; L-arginine from L-ornithine and carbamoyl phosphate: step 2/3. This chain is Argininosuccinate synthase, found in Xanthomonas axonopodis pv. citri (strain 306).